The following is a 308-amino-acid chain: Glutathione synthetase (308 aa).

The region spanning 120–304 (KLGALRFNNL…LADQVIARLL (185 aa)) is the ATP-grasp domain. 146–202 (AREQEEVVLKPLGGRAGQGLVRVAGAAPGLEALLELVTDQEQLPVMVQRFLPAVIEG) is an ATP binding site. Mg(2+) contacts are provided by E275 and N277.

Belongs to the prokaryotic GSH synthase family. The cofactor is Mg(2+). Requires Mn(2+) as cofactor.

It carries out the reaction gamma-L-glutamyl-L-cysteine + glycine + ATP = glutathione + ADP + phosphate + H(+). The protein operates within sulfur metabolism; glutathione biosynthesis; glutathione from L-cysteine and L-glutamate: step 2/2. This Prochlorococcus marinus (strain MIT 9313) protein is Glutathione synthetase.